The chain runs to 176 residues: PRL-1 phosphatase (176 aa).

The region spanning 13–166 (APALIEYKGM…YKPKARLKHK (154 aa)) is the Tyrosine-protein phosphatase domain. Catalysis depends on C109, which acts as the Phosphocysteine intermediate. A Cysteine methyl ester modification is found at C173. C173 carries S-farnesyl cysteine lipidation. The propeptide at 174–176 (SVQ) is removed in mature form.

It belongs to the protein-tyrosine phosphatase family. As to quaternary structure, homotrimer. Interacts with uex, possibly at the plasma membrane. In terms of tissue distribution, expressed in the adult head (at protein level). Expressed in neurons in the antennal lobe and V-glomeruli (at protein level). Expressed in dorsocentral neurons (at protein level).

It is found in the cytoplasm. Its subcellular location is the cell membrane. It localises to the apicolateral cell membrane. The protein resides in the cell projection. The protein localises to the axon. It carries out the reaction O-phospho-L-tyrosyl-[protein] + H2O = L-tyrosyl-[protein] + phosphate. Probable phosphatase. Inhibits growth possibly by negatively regulating Src64B-induced growth. Regulates central nervous system circuit formation and stabilization of synapse-dense terminal arbors. In dorsocentral neurons, regulates synaptogenesis in terminal arbors via modulation of the insulin receptor pathway, likely upstream of Akt1, and via reduction of PtdIns(4,5)P2 (Phosphatidylinositol 4,5-bisphosphate) levels. In the nervous system, plays a protective role together with uex in response to olfactory carbon dioxide stimulation. The sequence is that of PRL-1 phosphatase from Drosophila melanogaster (Fruit fly).